The chain runs to 420 residues: Shaggy-related protein kinase delta (420 aa).

Residues 1–61 (MESHLGNGVG…DIIDGVGAEP (61 aa)) are disordered. Over residues 10–26 (GSSRSAKNTKNTSSSVD) the composition is skewed to polar residues. Basic and acidic residues predominate over residues 28 to 41 (LSRDMLEMKIRDKT). Positions 42–53 (EADEERDSEPDI) are enriched in acidic residues. In terms of domain architecture, Protein kinase spans 82-366 (YIAEHVVGTG…AVEACIHPFF (285 aa)). Residues 88-96 (VGTGSFGMV) and lysine 111 each bind ATP. Catalysis depends on aspartate 207, which acts as the Proton acceptor. At tyrosine 242 the chain carries Phosphotyrosine.

This sequence belongs to the protein kinase superfamily. CMGC Ser/Thr protein kinase family. GSK-3 subfamily. In terms of processing, autophosphorylated mainly on threonine and serine residues.

The enzyme catalyses L-seryl-[protein] + ATP = O-phospho-L-seryl-[protein] + ADP + H(+). It catalyses the reaction L-threonyl-[protein] + ATP = O-phospho-L-threonyl-[protein] + ADP + H(+). In terms of biological role, may mediate extracellular signals to regulate transcription in differentiating cells. This is Shaggy-related protein kinase delta (ASK4) from Arabidopsis thaliana (Mouse-ear cress).